A 127-amino-acid chain; its full sequence is Cuticle protein 4 (127 aa).

Glutamine 1 bears the Pyrrolidone carboxylic acid mark. Repeat copies occupy residues 31–39 (PADTKKAEI) and 84–92 (PADTKKAEI).

In Blaberus craniifer (Death's head cockroach), this protein is Cuticle protein 4.